Consider the following 167-residue polypeptide: Putative pre-16S rRNA nuclease (167 aa).

It belongs to the YqgF nuclease family.

It localises to the cytoplasm. Could be a nuclease involved in processing of the 5'-end of pre-16S rRNA. The sequence is that of Putative pre-16S rRNA nuclease from Streptomyces coelicolor (strain ATCC BAA-471 / A3(2) / M145).